The chain runs to 114 residues: Flagellar transcriptional regulator FlhD (114 aa).

The protein belongs to the FlhD family. Homodimer; disulfide-linked. Forms a heterohexamer composed of two FlhC and four FlhD subunits. Each FlhC binds a FlhD dimer, forming a heterotrimer, and a hexamer assembles by dimerization of two heterotrimers.

It is found in the cytoplasm. Functionally, functions in complex with FlhC as a master transcriptional regulator that regulates transcription of several flagellar and non-flagellar operons by binding to their promoter region. Activates expression of class 2 flagellar genes, including fliA, which is a flagellum-specific sigma factor that turns on the class 3 genes. Also regulates genes whose products function in a variety of physiological pathways. In Wigglesworthia glossinidia brevipalpis, this protein is Flagellar transcriptional regulator FlhD.